A 370-amino-acid polypeptide reads, in one-letter code: Putative agmatine deiminase (370 aa).

The active-site Amidino-cysteine intermediate is Cys-361.

This sequence belongs to the agmatine deiminase family.

The enzyme catalyses agmatine + H2O = N-carbamoylputrescine + NH4(+). This chain is Putative agmatine deiminase, found in Shewanella putrefaciens (strain CN-32 / ATCC BAA-453).